The sequence spans 209 residues: Thiamine-phosphate synthase (209 aa).

4-amino-2-methyl-5-(diphosphooxymethyl)pyrimidine contacts are provided by residues 38 to 42 (QLREK) and Asn70. Asp71 and Asp90 together coordinate Mg(2+). Ser109 is a 4-amino-2-methyl-5-(diphosphooxymethyl)pyrimidine binding site. 135–137 (TPT) lines the 2-[(2R,5Z)-2-carboxy-4-methylthiazol-5(2H)-ylidene]ethyl phosphate pocket. A 4-amino-2-methyl-5-(diphosphooxymethyl)pyrimidine-binding site is contributed by Lys138. 2-[(2R,5Z)-2-carboxy-4-methylthiazol-5(2H)-ylidene]ethyl phosphate contacts are provided by residues Gly166 and 186 to 187 (IS).

The protein belongs to the thiamine-phosphate synthase family. Mg(2+) is required as a cofactor.

It catalyses the reaction 2-[(2R,5Z)-2-carboxy-4-methylthiazol-5(2H)-ylidene]ethyl phosphate + 4-amino-2-methyl-5-(diphosphooxymethyl)pyrimidine + 2 H(+) = thiamine phosphate + CO2 + diphosphate. It carries out the reaction 2-(2-carboxy-4-methylthiazol-5-yl)ethyl phosphate + 4-amino-2-methyl-5-(diphosphooxymethyl)pyrimidine + 2 H(+) = thiamine phosphate + CO2 + diphosphate. The catalysed reaction is 4-methyl-5-(2-phosphooxyethyl)-thiazole + 4-amino-2-methyl-5-(diphosphooxymethyl)pyrimidine + H(+) = thiamine phosphate + diphosphate. It functions in the pathway cofactor biosynthesis; thiamine diphosphate biosynthesis; thiamine phosphate from 4-amino-2-methyl-5-diphosphomethylpyrimidine and 4-methyl-5-(2-phosphoethyl)-thiazole: step 1/1. Its function is as follows. Condenses 4-methyl-5-(beta-hydroxyethyl)thiazole monophosphate (THZ-P) and 2-methyl-4-amino-5-hydroxymethyl pyrimidine pyrophosphate (HMP-PP) to form thiamine monophosphate (TMP). The sequence is that of Thiamine-phosphate synthase from Syntrophomonas wolfei subsp. wolfei (strain DSM 2245B / Goettingen).